Here is a 150-residue protein sequence, read N- to C-terminus: Protein Smg homolog (150 aa).

Belongs to the Smg family.

The sequence is that of Protein Smg homolog from Leptothrix cholodnii (strain ATCC 51168 / LMG 8142 / SP-6) (Leptothrix discophora (strain SP-6)).